The primary structure comprises 192 residues: MLQRNRIQTSSSTQTETTPPILRLRRPETRQKEDSKVKWTEDVIDNEHMGKHKSKVCCIFHPHREFGQSSDESSDSSSDSSDDSDYERNNDFDQNHRHSHNFDDINSDNSHSHSHGHNFDDKDDISNSSNNQDKGNTGMSKPSSSSPDNLVCEYGHIHKRNKKVRKPKRSSSPNAYERQPNYRNKSVVPVQK.

Disordered stretches follow at residues 1 to 53 (MLQR…GKHK) and 65 to 192 (EFGQ…PVQK). The segment covering 8 to 18 (QTSSSTQTETT) has biased composition (low complexity). Residues 25 to 49 (RRPETRQKEDSKVKWTEDVIDNEHM) show a composition bias toward basic and acidic residues. Low complexity predominate over residues 69–79 (SSDESSDSSSD). Residues 86 to 103 (YERNNDFDQNHRHSHNFD) are compositionally biased toward basic and acidic residues. Residues 134 to 148 (KGNTGMSKPSSSSPD) are compositionally biased toward polar residues. Positions 157–169 (IHKRNKKVRKPKR) are enriched in basic residues.

It belongs to the YPI1 family.

The protein resides in the nucleus. Regulator of type 1 phosphatases which maintains protein phosphatase activity under strict control. The polypeptide is Type 1 phosphatases regulator YPI2 (YPI2) (Scheffersomyces stipitis (strain ATCC 58785 / CBS 6054 / NBRC 10063 / NRRL Y-11545) (Yeast)).